A 107-amino-acid polypeptide reads, in one-letter code: Putative ankyrin repeat protein L14 (107 aa).

3 ANK repeats span residues 19 to 48 (DNNYVVRPTSIKVYIEVVKYLVSQGANIRA), 49 to 78 (DNDCAVRFASRNGHLEVVKYLVSLGANIRA), and 80 to 107 (NDCAVRWASRNGHLDVVEYLVSLGAVLS).

This Acanthamoeba polyphaga (Amoeba) protein is Putative ankyrin repeat protein L14.